A 109-amino-acid chain; its full sequence is Defensin-B5 (109 aa).

A signal peptide spans 1-20 (MRGLLPFLFLLSFFLSPIQA). Positions 21–44 (QPEGREEELEETWSEDRDQAPPRV) are disordered. Positions 21 to 70 (QPEGREEELEETWSEDRDQAPPRVVEESEVVGAENEAGLAAGRSYPWIIL) are excised as a propeptide. Basic and acidic residues predominate over residues 34–44 (SEDRDQAPPRV). Cystine bridges form between cysteine 73-cysteine 101, cysteine 80-cysteine 95, and cysteine 85-cysteine 102. A propeptide spanning residues 107-109 (AVP) is cleaved from the precursor.

This sequence belongs to the beta-defensin family. As to expression, highly expressed in kidney, and expressed at lower levels in testis.

Its subcellular location is the secreted. Has antimicrobial activity. This chain is Defensin-B5, found in Ornithorhynchus anatinus (Duckbill platypus).